We begin with the raw amino-acid sequence, 517 residues long: MNKLAVLYAEHIATLQKRTREIIERENLDGVVFHSGQAKRQFLDDMYYPFKVNPQFKAWLPVIDNPHCWIVANGTDKPKLIFYRPVDFWHKVPDEPNEYWADYFDIELLVKPDQVEKLLPYDKARFAYIGEYLEVAQALGFELMNPEPVMNFYHYHRAYKTQYELACMREANKIAVQGHKAARDAFFQGKSEFEIQQAYLLATQHSENDNAYGNIVALNENCAILHYTHFDRVAPATHRSFLIDAGANFNGYAADITRTYDFTGEGEFAELVATMKQHQIALCNQLAPGKLYGELHLDCHQRVAQTLSDFNIVDLSADEIVAKGITSTFFPHGLGHHIGLQVHDVGGFMADEQGAHQEPPEGHPFLRCTRKIEANQVFTIEPGLYFIDSLLGDLAATDNNQHINWDKVAELKPFGGIRIEDNIIVHEDSLENMTRELRARLTTHSLRGLSAPQFSINDPAVMSEYSYPSEPLSYEEEIKKSTFIVHVRTRRILVRRRTLSPILIAVTPMPAITAGLM.

The Mn(2+) site is built by Asp-244, Asp-255, His-336, Glu-381, and Glu-420.

The protein belongs to the peptidase M24B family. Bacterial-type prolidase subfamily. In terms of assembly, monomer. The cofactor is Mn(2+).

It catalyses the reaction Xaa-L-Pro dipeptide + H2O = an L-alpha-amino acid + L-proline. The enzyme catalyses diisopropyl fluorophosphate + H2O = diisopropyl phosphate + fluoride + 2 H(+). It carries out the reaction An aryl dialkyl phosphate + H2O = dialkyl phosphate + an aryl alcohol.. Its function is as follows. Splits dipeptides with a prolyl or hydroxyprolyl residue in the C-terminal position and a nonpolar amino acid at the N-terminal position. Also catalyzes the hydrolysis of toxic organophosphorus cholinesterase-inhibiting compounds including insecticide paraoxon and nerve gases such as diisopropylfluorophosphate (DFP), O-isopropyl methylphosphonofluoridate (sarin), O-pinacolyl methylphosphonofluoridate (soman), and O-cyclohexyl methylphosphonofluoridate. This chain is Xaa-Pro dipeptidase (pepQ), found in Alteromonas sp.